Reading from the N-terminus, the 291-residue chain is Transmembrane protein 41B (291 aa).

The disordered stretch occupies residues 1–39 (MAKGRVAERSQLGAHHTTPVGDGAAGTRGLAAPGSRDHQ). The residue at position 18 (Thr-18) is a Phosphothreonine. Phosphoserine is present on Ser-35. A run of 6 helical transmembrane segments spans residues 52-72 (MSLLILVSIFLSAAFVMFLVY), 109-129 (FYVQVLVAYFATYIFLQTFAI), 147-169 (LALFLVCLCSGLGASFCYMLSYL), 197-217 (LINYIIFLRITPFLPNWFINI), 225-245 (PLKVFFIGTFLGVAPPSFVAI), and 262-282 (SWNSIFILMILAVLSILPAIF). Residues 140–251 (GFLYPFPLAL…FVAIKAGTTL (112 aa)) are VTT domain; required for its function in autophagy.

It belongs to the TMEM41 family. Interacts with VMP1. Interacts with COPA, COPB1, VDAC1 and ERLIN2. Interacts with ATG2A. Interacts with SURF4. In terms of assembly, (Microbial infection) Interacts with Zika virus NS4A protein and Yellow fever virus NS4B protein.

The protein resides in the endoplasmic reticulum membrane. It is found in the endomembrane system. The protein localises to the cytoplasm. The enzyme catalyses a 1,2-diacyl-sn-glycero-3-phospho-L-serine(in) = a 1,2-diacyl-sn-glycero-3-phospho-L-serine(out). It carries out the reaction cholesterol(in) = cholesterol(out). It catalyses the reaction a 1,2-diacyl-sn-glycero-3-phosphocholine(in) = a 1,2-diacyl-sn-glycero-3-phosphocholine(out). The catalysed reaction is a 1,2-diacyl-sn-glycero-3-phosphoethanolamine(in) = a 1,2-diacyl-sn-glycero-3-phosphoethanolamine(out). In terms of biological role, phospholipid scramblase involved in lipid homeostasis and membrane dynamics processes. Has phospholipid scramblase activity toward cholesterol and phosphatidylserine, as well as phosphatidylethanolamine and phosphatidylcholine. Required for autophagosome formation: participates in early stages of autophagosome biogenesis at the endoplasmic reticulum (ER) membrane by reequilibrating the leaflets of the ER as lipids are extracted by ATG2 (ATG2A or ATG2B) to mediate autophagosome assembly. In addition to autophagy, involved in other processes in which phospholipid scramblase activity is required. Required for normal motor neuron development. Functionally, (Microbial infection) Critical host factor required for infection by human coronaviruses SARS-CoV-2, HCoV-OC43, HCoV-NL63, and HCoV-229E, as well as all flaviviruses tested such as Zika virus and Yellow fever virus. Required post-entry of the virus to facilitate the ER membrane remodeling necessary to form replication organelles. The chain is Transmembrane protein 41B from Homo sapiens (Human).